Consider the following 332-residue polypeptide: Glyceraldehyde-3-phosphate dehydrogenase 2 (332 aa).

Positions 11, 12, and 33 each coordinate NAD(+). Glycyl lysine isopeptide (Lys-Gly) (interchain with G-Cter in ubiquitin) cross-links involve residues Lys-46 and Lys-63. Thr-120 lines the NAD(+) pocket. D-glyceraldehyde 3-phosphate-binding positions include 149–151, Thr-180, 209–210, and Arg-232; these read SCT and TG. Cys-150 acts as the Nucleophile in catalysis. Position 302 is a phosphoserine (Ser-302). NAD(+) is bound by residues Asn-314 and Tyr-318.

Belongs to the glyceraldehyde-3-phosphate dehydrogenase family. Homotetramer.

The protein resides in the cytoplasm. The enzyme catalyses D-glyceraldehyde 3-phosphate + phosphate + NAD(+) = (2R)-3-phospho-glyceroyl phosphate + NADH + H(+). It catalyses the reaction NADH + H2O = (6R)-NADHX. The catalysed reaction is NADH + H2O = (6S)-NADHX. It carries out the reaction NADPH + H2O = (6R)-NADPHX. The enzyme catalyses NADPH + H2O = (6S)-NADPHX. Its pathway is carbohydrate degradation; glycolysis; pyruvate from D-glyceraldehyde 3-phosphate: step 1/5. Glyceraldehyde-3-phosphate dehydrogenase (GAPDH) involved in glycolysis and gluconeogenesis. Catalyzes the reaction of glyceraldehyde-3-phosphate to 1,3 bis-phosphoglycerate. The contribution of the TDH1, TDH2, and TDH3 to the total glyceraldehyde-3-phosphate dehydrogenase activity is 10-15, 25-30, and 50-60%, respectively. Functionally, as a side activity, catalyzes the hydration of the nicotinamide ring of NADH or NADPH at the C6 position to give the corresponding hydrates, NADHX and NADPHX, which exist as R and S epimers, that cannot act as electron donors or acceptors and inhibit several dehydrogenases, making them toxic. This chain is Glyceraldehyde-3-phosphate dehydrogenase 2, found in Saccharomyces cerevisiae (strain ATCC 204508 / S288c) (Baker's yeast).